We begin with the raw amino-acid sequence, 144 residues long: Large ribosomal subunit protein uL15 (144 aa).

The tract at residues 1-57 (MKLNDLSPAPGSRREKHRPGRGIGSGLGKTGGRGHKGQTSRSGGSIAPGFEGGQQPL) is disordered. The span at 21–31 (RGIGSGLGKTG) shows a compositional bias: gly residues.

This sequence belongs to the universal ribosomal protein uL15 family. In terms of assembly, part of the 50S ribosomal subunit.

In terms of biological role, binds to the 23S rRNA. In Pseudomonas putida (strain ATCC 700007 / DSM 6899 / JCM 31910 / BCRC 17059 / LMG 24140 / F1), this protein is Large ribosomal subunit protein uL15.